A 763-amino-acid polypeptide reads, in one-letter code: Phosphoglycerol transferase I (763 aa).

4 consecutive transmembrane segments (helical) span residues 1 to 21, 26 to 46, 77 to 97, and 108 to 128; these read MSEL…AWKA, WWFA…ITLY, ILPG…LGWI, and VGYS…SPAF.

Belongs to the OpgB family.

Its subcellular location is the cell inner membrane. The catalysed reaction is a phosphatidylglycerol + a membrane-derived-oligosaccharide D-glucose = a 1,2-diacyl-sn-glycerol + a membrane-derived-oligosaccharide 6-(glycerophospho)-D-glucose.. The protein operates within glycan metabolism; osmoregulated periplasmic glucan (OPG) biosynthesis. Transfers a phosphoglycerol residue from phosphatidylglycerol to the membrane-bound nascent glucan backbones. This is Phosphoglycerol transferase I from Salmonella newport (strain SL254).